Reading from the N-terminus, the 196-residue chain is Nucleoid occlusion factor SlmA (196 aa).

Positions 7 to 68 (SNRREEILQA…GLIEFIEEAL (62 aa)) constitute an HTH tetR-type domain. Positions 31–50 (TTAKLAQQVGVSEAALYRHF) form a DNA-binding region, H-T-H motif. The stretch at 65 to 142 (EEALMSRINR…QLRQILRERK (78 aa)) forms a coiled coil.

Belongs to the nucleoid occlusion factor SlmA family. As to quaternary structure, homodimer. Interacts with FtsZ.

It is found in the cytoplasm. The protein localises to the nucleoid. Required for nucleoid occlusion (NO) phenomenon, which prevents Z-ring formation and cell division over the nucleoid. Acts as a DNA-associated cell division inhibitor that binds simultaneously chromosomal DNA and FtsZ, and disrupts the assembly of FtsZ polymers. SlmA-DNA-binding sequences (SBS) are dispersed on non-Ter regions of the chromosome, preventing FtsZ polymerization at these regions. This is Nucleoid occlusion factor SlmA from Vibrio vulnificus (strain CMCP6).